The sequence spans 425 residues: Serine hydroxymethyltransferase (425 aa).

(6S)-5,6,7,8-tetrahydrofolate-binding positions include L123 and 127-129 (GHL). K232 bears the N6-(pyridoxal phosphate)lysine mark. E248 is a binding site for (6S)-5,6,7,8-tetrahydrofolate.

The protein belongs to the SHMT family. Homodimer. Pyridoxal 5'-phosphate is required as a cofactor.

It is found in the cytoplasm. The catalysed reaction is (6R)-5,10-methylene-5,6,7,8-tetrahydrofolate + glycine + H2O = (6S)-5,6,7,8-tetrahydrofolate + L-serine. It participates in one-carbon metabolism; tetrahydrofolate interconversion. Its pathway is amino-acid biosynthesis; glycine biosynthesis; glycine from L-serine: step 1/1. Catalyzes the reversible interconversion of serine and glycine with tetrahydrofolate (THF) serving as the one-carbon carrier. This reaction serves as the major source of one-carbon groups required for the biosynthesis of purines, thymidylate, methionine, and other important biomolecules. Also exhibits THF-independent aldolase activity toward beta-hydroxyamino acids, producing glycine and aldehydes, via a retro-aldol mechanism. The chain is Serine hydroxymethyltransferase from Anaplasma phagocytophilum (strain HZ).